Consider the following 617-residue polypeptide: MSPMARTAPVPAATDPAIIRNFCIIAHIDHGKSTLADRMLQYTGVVQSRDMKAQYLDRMDIERERGITIKSQAVRMPWEVDGTSYALNMIDTPGHVDFTYEVSRSLAACEGAVLLVDAAQGIEAQTLANLYLAMENNLTIIPVLNKIDLPAAQPEKYAEELANLIGGDPDEVLRVSGKTGMGVEVLLDKIVRDLPAPVGDPDAPARAMIFDSVYDTYRGVVTYVRVVDGMLHPRERIQMMSTRATHELLEIGVSSPEPTPSKGLGVGEVGYLITGVKDVRLSKVGDTVTNLAKPASQSLPGYADAKPMVFSGLYPLDGTDYPVLRDALEKLMLNDAALVYQPETSAALGFGFRVGFLGLLHLEITRERLEREYKLDLISTAPNVEYEVTLEDKRVVHVTNPSEYPTGKIAEVREPMVSATILAPNEFVGAIMELCQSRRGVMGGMDYLSEDRVEIRYRLPLAEIVFDFFDILKSKTRGYGSLDWKADGDQVADLVKVDIMLQGEQVDAFSAITHRDKAYAYGVMMTGKLRELIPRQQFEVPIQAAIGSRIIARESIRAIRKDVLAKCYGGDITRKRKLLEKQKEGKKRMKMVGRVEVPQEAFIAALTTDESKDKAKK.

The tr-type G domain maps to 17–198 (AIIRNFCIIA…KIVRDLPAPV (182 aa)). Residues 29–34 (DHGKST) and 145–148 (NKID) each bind GTP.

The protein belongs to the TRAFAC class translation factor GTPase superfamily. Classic translation factor GTPase family. LepA subfamily.

It is found in the cell membrane. The catalysed reaction is GTP + H2O = GDP + phosphate + H(+). In terms of biological role, required for accurate and efficient protein synthesis under certain stress conditions. May act as a fidelity factor of the translation reaction, by catalyzing a one-codon backward translocation of tRNAs on improperly translocated ribosomes. Back-translocation proceeds from a post-translocation (POST) complex to a pre-translocation (PRE) complex, thus giving elongation factor G a second chance to translocate the tRNAs correctly. Binds to ribosomes in a GTP-dependent manner. In Arthrobacter sp. (strain FB24), this protein is Elongation factor 4.